The chain runs to 500 residues: NAD(P)H-quinone oxidoreductase chain 4, chloroplastic (500 aa).

The next 13 membrane-spanning stretches (helical) occupy residues 4 to 24, 35 to 55, 87 to 107, 134 to 154, 167 to 187, 208 to 228, 242 to 262, 272 to 292, 305 to 325, 330 to 350, 386 to 406, 411 to 431, and 462 to 482; these read FPWL…IFFL, YTIC…CYHF, IGPI…AWPV, LLLF…LLAM, FILY…GVAL, VLEI…SPII, HYST…YGLI, AHSI…IYAA, IAYP…SLTD, GALL…FLAG, LALP…GIIT, LLIP…LTPI, and LFLS…PDFV.

It belongs to the complex I subunit 4 family.

The protein localises to the plastid. It is found in the chloroplast thylakoid membrane. The catalysed reaction is a plastoquinone + NADH + (n+1) H(+)(in) = a plastoquinol + NAD(+) + n H(+)(out). It catalyses the reaction a plastoquinone + NADPH + (n+1) H(+)(in) = a plastoquinol + NADP(+) + n H(+)(out). This chain is NAD(P)H-quinone oxidoreductase chain 4, chloroplastic, found in Solanum tuberosum (Potato).